The primary structure comprises 387 residues: Succinate--CoA ligase [ADP-forming] subunit beta (387 aa).

The ATP-grasp domain occupies 9–236 (KGLFAKHNVP…RAATDPLELK (228 aa)). ATP contacts are provided by residues lysine 45, 52-54 (GRG), serine 94, and glutamate 99. Mg(2+)-binding residues include asparagine 191 and aspartate 205. Substrate contacts are provided by residues asparagine 256 and 318 to 320 (GIT).

Belongs to the succinate/malate CoA ligase beta subunit family. In terms of assembly, heterotetramer of two alpha and two beta subunits. It depends on Mg(2+) as a cofactor.

The enzyme catalyses succinate + ATP + CoA = succinyl-CoA + ADP + phosphate. It catalyses the reaction GTP + succinate + CoA = succinyl-CoA + GDP + phosphate. The protein operates within carbohydrate metabolism; tricarboxylic acid cycle; succinate from succinyl-CoA (ligase route): step 1/1. Succinyl-CoA synthetase functions in the citric acid cycle (TCA), coupling the hydrolysis of succinyl-CoA to the synthesis of either ATP or GTP and thus represents the only step of substrate-level phosphorylation in the TCA. The beta subunit provides nucleotide specificity of the enzyme and binds the substrate succinate, while the binding sites for coenzyme A and phosphate are found in the alpha subunit. The chain is Succinate--CoA ligase [ADP-forming] subunit beta from Mycobacterium ulcerans (strain Agy99).